A 98-amino-acid chain; its full sequence is uncharacterized protein (98 aa).

This is an uncharacterized protein from Enterobacteria phage T4 (Bacteriophage T4).